A 56-amino-acid chain; its full sequence is Small ribosomal subunit protein uS14 (56 aa).

Zn(2+) is bound by residues cysteine 21, cysteine 24, cysteine 39, and cysteine 42.

This sequence belongs to the universal ribosomal protein uS14 family. Component of the 40S small ribosomal subunit. Zn(2+) is required as a cofactor.

It localises to the cytoplasm. Its subcellular location is the cytosol. It is found in the rough endoplasmic reticulum. The sequence is that of Small ribosomal subunit protein uS14 (RpS29) from Spodoptera frugiperda (Fall armyworm).